Here is a 277-residue protein sequence, read N- to C-terminus: Large ribosomal subunit protein uL2 (277 aa).

Residues 219–277 (TVRGSVMNPNDHPHGGGEGKAPVGRKAPSTPWGKPALGLKTRNKKAKSDKLIVRRRNEK) form a disordered region. Positions 264–277 (AKSDKLIVRRRNEK) are enriched in basic and acidic residues.

Belongs to the universal ribosomal protein uL2 family. In terms of assembly, part of the 50S ribosomal subunit. Forms a bridge to the 30S subunit in the 70S ribosome.

In terms of biological role, one of the primary rRNA binding proteins. Required for association of the 30S and 50S subunits to form the 70S ribosome, for tRNA binding and peptide bond formation. It has been suggested to have peptidyltransferase activity; this is somewhat controversial. Makes several contacts with the 16S rRNA in the 70S ribosome. The sequence is that of Large ribosomal subunit protein uL2 from Streptococcus pyogenes serotype M1.